Reading from the N-terminus, the 446-residue chain is Glutamine synthetase (446 aa).

Residues 18-103 (ENVRYLRLQF…LICDVYKTDG (86 aa)) enclose the GS beta-grasp domain. A GS catalytic domain is found at 110–446 (PRANLKRVLK…WERDQYMKQY (337 aa)). Residues E134 and E136 each contribute to the Mg(2+) site. E186 is an ATP binding site. Mg(2+)-binding residues include E191 and E198. Residues 242–243 (NG) and G243 contribute to the L-glutamate site. Residue H247 coordinates Mg(2+). Residue S251 participates in ATP binding. L-glutamate-binding residues include R300, E306, and R318. The ATP site is built by R318 and R323. E335 lines the Mg(2+) pocket. R337 contributes to the L-glutamate binding site.

The protein belongs to the glutamine synthetase family. Oligomer of 12 subunits arranged in the form of two hexagons. In its feedback-inhibited form, interacts with TnrA in order to block its DNA-binding activity. Requires Mg(2+) as cofactor.

It localises to the cytoplasm. The enzyme catalyses L-glutamate + NH4(+) + ATP = L-glutamine + ADP + phosphate + H(+). Inhibited by glutamine. In terms of biological role, glutamine synthetase (GS) is an unusual multitasking protein that functions as an enzyme, a transcription coregulator, and a chaperone in ammonium assimilation and in the regulation of genes involved in nitrogen metabolism. It catalyzes the ATP-dependent biosynthesis of glutamine from glutamate and ammonia. Feedback-inhibited GlnA also interacts with and regulates the activity of the transcriptional regulator TnrA. During nitrogen limitation, TnrA is in its DNA-binding active state and turns on the transcription of genes required for nitrogen assimilation. Under conditions of nitrogen excess, feedback-inhibited GlnA forms a stable complex with TnrA, which inhibits its DNA-binding activity. In contrast, feedback-inhibited GlnA acts as a chaperone to stabilize the DNA-binding activity of GlnR, which represses the transcription of nitrogen assimilation genes. The sequence is that of Glutamine synthetase from Staphylococcus aureus (strain MRSA252).